A 740-amino-acid polypeptide reads, in one-letter code: Ribulose bisphosphate carboxylase, chloroplastic (740 aa).

A chloroplast-targeting transit peptide spans 1-55; the sequence is MPSSSFTTGLALGAGALVGANAFVAPTAKTTNLRAPTQEASLQVAASQQTEQPAP. The chain crosses the membrane as a helical span at residues 56-76; the sequence is STSALPWAFGAGACLALAAGG. Position 213 (Asn-213) interacts with substrate. Catalysis depends on Lys-268, which acts as the Proton acceptor. Lys-270 is a binding site for substrate. 3 residues coordinate Mg(2+): Lys-293, Asp-295, and Glu-296. Lys-293 is subject to N6-carboxylysine. His-389 acts as the Proton acceptor in catalysis. Substrate contacts are provided by Arg-390, His-423, and Ser-470.

The protein belongs to the RuBisCO large chain family. Type II subfamily. As to quaternary structure, homodimer. The cofactor is Mg(2+).

The protein localises to the plastid. Its subcellular location is the chloroplast membrane. The catalysed reaction is 2 (2R)-3-phosphoglycerate + 2 H(+) = D-ribulose 1,5-bisphosphate + CO2 + H2O. It catalyses the reaction D-ribulose 1,5-bisphosphate + O2 = 2-phosphoglycolate + (2R)-3-phosphoglycerate + 2 H(+). In terms of biological role, ruBisCO catalyzes two reactions: the carboxylation of D-ribulose 1,5-bisphosphate, the primary event in carbon dioxide fixation, as well as the oxidative fragmentation of the pentose substrate. Both reactions occur simultaneously and in competition at the same active site. This is Ribulose bisphosphate carboxylase, chloroplastic (rbcL) from Heterocapsa triquetra (Dinoflagellate).